The following is a 438-amino-acid chain: Exosome complex component RRP45B (438 aa).

Disordered regions lie at residues 293-322 (PTLA…RAAE) and 334-438 (STEE…KNKS). Composition is skewed to basic and acidic residues over residues 307-322 (VKEE…RAAE) and 334-347 (STEE…EEAA). Residues 380–394 (TKSSSTKKMNGSGNA) are compositionally biased toward polar residues. Positions 410–429 (LGKKDTKHKDGEMTLKDAVK) are enriched in basic and acidic residues.

Belongs to the RNase PH family.

Its subcellular location is the cytoplasm. The protein resides in the nucleus. Probable 3'-&gt;5' exoribonuclease involved in the regulation of cuticular wax biosynthesis by controlling the expression of CER3. May act by degrading a specific mRNA species encoding a negative regulator of CER3 transcription. Can perform exosomal functions and complement the yeast rrp45 null mutant. The protein is Exosome complex component RRP45B of Arabidopsis thaliana (Mouse-ear cress).